The following is a 240-amino-acid chain: Pyridoxine 5'-phosphate synthase (240 aa).

Residue Asn-7 coordinates 3-amino-2-oxopropyl phosphate. 9 to 10 (DH) serves as a coordination point for 1-deoxy-D-xylulose 5-phosphate. 3-amino-2-oxopropyl phosphate is bound at residue Arg-18. His-43 acts as the Proton acceptor in catalysis. Arg-45 and His-50 together coordinate 1-deoxy-D-xylulose 5-phosphate. Glu-70 functions as the Proton acceptor in the catalytic mechanism. Thr-100 serves as a coordination point for 1-deoxy-D-xylulose 5-phosphate. His-191 serves as the catalytic Proton donor. Residues Gly-192 and 213–214 (GH) contribute to the 3-amino-2-oxopropyl phosphate site.

This sequence belongs to the PNP synthase family. As to quaternary structure, homooctamer; tetramer of dimers.

Its subcellular location is the cytoplasm. It catalyses the reaction 3-amino-2-oxopropyl phosphate + 1-deoxy-D-xylulose 5-phosphate = pyridoxine 5'-phosphate + phosphate + 2 H2O + H(+). It functions in the pathway cofactor biosynthesis; pyridoxine 5'-phosphate biosynthesis; pyridoxine 5'-phosphate from D-erythrose 4-phosphate: step 5/5. In terms of biological role, catalyzes the complicated ring closure reaction between the two acyclic compounds 1-deoxy-D-xylulose-5-phosphate (DXP) and 3-amino-2-oxopropyl phosphate (1-amino-acetone-3-phosphate or AAP) to form pyridoxine 5'-phosphate (PNP) and inorganic phosphate. In Synechococcus elongatus (strain ATCC 33912 / PCC 7942 / FACHB-805) (Anacystis nidulans R2), this protein is Pyridoxine 5'-phosphate synthase.